The sequence spans 308 residues: Probable very-long-chain enoyl-CoA reductase art-1 (308 aa).

In terms of domain architecture, Ubiquitin-like spans 7-85; the sequence is VYDAKRTDNL…VLYVRDLGPQ (79 aa). Helical transmembrane passes span 112-132, 169-189, 194-214, and 255-275; these read FIYG…IAFF, WGFA…PPAF, VYFG…IHIL, and WIFF…TAGF.

Belongs to the steroid 5-alpha reductase family.

It localises to the endoplasmic reticulum membrane. The catalysed reaction is a very-long-chain 2,3-saturated fatty acyl-CoA + NADP(+) = a very-long-chain (2E)-enoyl-CoA + NADPH + H(+). It functions in the pathway lipid metabolism; fatty acid biosynthesis. Its function is as follows. Catalyzes the last of the four reactions of the long-chain fatty acids elongation cycle. This endoplasmic reticulum-bound enzymatic process, allows the addition of 2 carbons to the chain of long- and very long-chain fatty acids/VLCFAs per cycle. This enzyme reduces the trans-2,3-enoyl-CoA fatty acid intermediate to an acyl-CoA that can be further elongated by entering a new cycle of elongation. Thereby, it participates in the production of VLCFAs of different chain lengths that are involved in multiple biological processes as precursors of membrane lipids and lipid mediators. The polypeptide is Probable very-long-chain enoyl-CoA reductase art-1 (art-1) (Caenorhabditis elegans).